Consider the following 352-residue polypeptide: D-alanine--D-alanine ligase (352 aa).

One can recognise an ATP-grasp domain in the interval 135–344 (KTVFAKAGLP…FPQLVDRLIE (210 aa)). Residue 171–226 (EETLNYPCFVKPANLGSSVGIAKVRSRSELEKALDQAASYDRRIIVEAGVIAREVE) coordinates ATP. Mg(2+) is bound by residues Asp-297, Glu-311, and Asn-313.

The protein belongs to the D-alanine--D-alanine ligase family. Mg(2+) serves as cofactor. Mn(2+) is required as a cofactor.

It localises to the cytoplasm. It carries out the reaction 2 D-alanine + ATP = D-alanyl-D-alanine + ADP + phosphate + H(+). The protein operates within cell wall biogenesis; peptidoglycan biosynthesis. Cell wall formation. This chain is D-alanine--D-alanine ligase, found in Gloeothece citriformis (strain PCC 7424) (Cyanothece sp. (strain PCC 7424)).